The primary structure comprises 278 residues: tRNA(Phe) (4-demethylwyosine(37)-C(7)) aminocarboxypropyltransferase (278 aa).

Residues Ser109, Arg116, Glu155, and 183-184 (DN) contribute to the S-adenosyl-L-methionine site.

It belongs to the class I-like SAM-binding methyltransferase superfamily. TRM5/TYW2 family.

It localises to the cytoplasm. It catalyses the reaction 4-demethylwyosine(37) in tRNA(Phe) + S-adenosyl-L-methionine = 4-demethyl-7-[(3S)-3-amino-3-carboxypropyl]wyosine(37) in tRNA(Phe) + S-methyl-5'-thioadenosine + H(+). S-adenosyl-L-methionine-dependent transferase that acts as a component of the wyosine derivatives biosynthesis pathway. Catalyzes the transfer of the alpha-amino-alpha-carboxypropyl (acp) group from S-adenosyl-L-methionine to 4-demethylwyosine (imG-14), forming 7-aminocarboxypropyl-demethylwyosine (wybutosine-86) at position 37 of tRNA(Phe). This Pyrococcus horikoshii (strain ATCC 700860 / DSM 12428 / JCM 9974 / NBRC 100139 / OT-3) protein is tRNA(Phe) (4-demethylwyosine(37)-C(7)) aminocarboxypropyltransferase.